A 194-amino-acid polypeptide reads, in one-letter code: Holliday junction branch migration complex subunit RuvA (194 aa).

A domain I region spans residues 1-61 (MYDFLTGIIK…DNQISLYGFK (61 aa)). The tract at residues 62–139 (TVKERNLFQK…GDFSKNIAPM (78 aa)) is domain II. Positions 139 to 143 (MKNLL) are flexible linker. The tract at residues 144-194 (ENSAELDDALAALVALGFSSKEVNKINPKLASLGELTTDAYIQKGLKLLTK) is domain III.

Belongs to the RuvA family. In terms of assembly, homotetramer. Forms an RuvA(8)-RuvB(12)-Holliday junction (HJ) complex. HJ DNA is sandwiched between 2 RuvA tetramers; dsDNA enters through RuvA and exits via RuvB. An RuvB hexamer assembles on each DNA strand where it exits the tetramer. Each RuvB hexamer is contacted by two RuvA subunits (via domain III) on 2 adjacent RuvB subunits; this complex drives branch migration. In the full resolvosome a probable DNA-RuvA(4)-RuvB(12)-RuvC(2) complex forms which resolves the HJ.

It is found in the cytoplasm. Functionally, the RuvA-RuvB-RuvC complex processes Holliday junction (HJ) DNA during genetic recombination and DNA repair, while the RuvA-RuvB complex plays an important role in the rescue of blocked DNA replication forks via replication fork reversal (RFR). RuvA specifically binds to HJ cruciform DNA, conferring on it an open structure. The RuvB hexamer acts as an ATP-dependent pump, pulling dsDNA into and through the RuvAB complex. HJ branch migration allows RuvC to scan DNA until it finds its consensus sequence, where it cleaves and resolves the cruciform DNA. The protein is Holliday junction branch migration complex subunit RuvA of Oenococcus oeni (strain ATCC BAA-331 / PSU-1).